Here is a 132-residue protein sequence, read N- to C-terminus: Holo-[acyl-carrier-protein] synthase (132 aa).

Aspartate 8 and glutamate 64 together coordinate Mg(2+).

The protein belongs to the P-Pant transferase superfamily. AcpS family. Mg(2+) is required as a cofactor.

It localises to the cytoplasm. It carries out the reaction apo-[ACP] + CoA = holo-[ACP] + adenosine 3',5'-bisphosphate + H(+). Transfers the 4'-phosphopantetheine moiety from coenzyme A to a Ser of acyl-carrier-protein. This chain is Holo-[acyl-carrier-protein] synthase, found in Shewanella sediminis (strain HAW-EB3).